Reading from the N-terminus, the 586-residue chain is Kelch-like protein 7 (586 aa).

A BTB domain is found at 44-111; sequence CDVILMVQER…AYTARISVNS (68 aa). A BACK domain is found at 146–248; it reads CLGISVLAEC…SKNFLSKTVQ (103 aa). 6 Kelch repeats span residues 294 to 336, 337 to 382, 383 to 430, 431 to 481, 483 to 528, and 530 to 575; these read RIAL…FWDN, VVYI…AAEG, KIYT…EANG, LIYV…FVKD, IFAV…AVGS, and IYVL…CVVD.

As to quaternary structure, homodimer. Component of the BCR(KLHL7) E3 ubiquitin ligase complex, at least composed of CUL3 and KLHL7 and RBX1.

It is found in the nucleus. It localises to the cytoplasm. It participates in protein modification; protein ubiquitination. Functionally, substrate-specific adapter of a BCR (BTB-CUL3-RBX1) E3 ubiquitin ligase complex. The BCR(KLHL7) complex acts by mediating ubiquitination and subsequent degradation of substrate proteins. Probably mediates 'Lys-48'-linked ubiquitination. The sequence is that of Kelch-like protein 7 (Klhl7) from Rattus norvegicus (Rat).